The following is a 325-amino-acid chain: G/U mismatch-specific uracil DNA glycosylase (325 aa).

Residues 1–11 show a composition bias toward basic and acidic residues; it reads MNDIETRDTGT. A disordered region spans residues 1–50; that stretch reads MNDIETRDTGTKNDNSSEFNLSVKSHKRKRSFDDENLELEESREETSGGI. Polar residues predominate over residues 12-23; sequence KNDNSSEFNLSV. A compositionally biased stretch (acidic residues) spans 34–43; it reads DENLELEESR.

The protein belongs to the uracil-DNA glycosylase (UDG) superfamily. TDG/mug family.

It is found in the nucleus. It carries out the reaction Specifically hydrolyzes mismatched double-stranded DNA and polynucleotides, releasing free uracil.. In terms of biological role, removes uracil from G/U mispairs in ssDNA. Also corrects G/G mispairs. Does not catalyze the removal of thymine from G/T mispairs. The polypeptide is G/U mismatch-specific uracil DNA glycosylase (thp1) (Schizosaccharomyces pombe (strain 972 / ATCC 24843) (Fission yeast)).